A 470-amino-acid polypeptide reads, in one-letter code: Uronate isomerase (470 aa).

The protein belongs to the metallo-dependent hydrolases superfamily. Uronate isomerase family.

It carries out the reaction D-glucuronate = D-fructuronate. It catalyses the reaction aldehydo-D-galacturonate = keto-D-tagaturonate. Its pathway is carbohydrate metabolism; pentose and glucuronate interconversion. The chain is Uronate isomerase from Salmonella paratyphi A (strain ATCC 9150 / SARB42).